Here is a 102-residue protein sequence, read N- to C-terminus: Redox- and pH-responsive transcriptional regulator WhiB3 (102 aa).

The region spanning 22-86 (LCRGMDSSMF…GGLSESERDL (65 aa)) is the 4Fe-4S Wbl-type domain. [4Fe-4S] cluster is bound by residues cysteine 23, cysteine 53, cysteine 56, and cysteine 62.

This sequence belongs to the WhiB family. Homodimer. Interacts with the C-terminal 54 residues of sigma factor SigA (RpoV). The cofactor is [4Fe-4S] cluster. The 4Fe-4S cluster interacts with NO, forming a protein-bound dinitrosyliron dithiol complex. Post-translationally, the 4Fe-4S cluster interacts with O(2), leading to its degradation. Cluster loss takes about 2 hours. Once in the apo-form the cysteines oxidize to form 2 intramolecular disulfide bonds.

Its subcellular location is the cytoplasm. A redox-sensitive transcriptional regulator. Maintains intracellular redox homeostasis by regulating catabolic metabolism and polyketide biosynthesis. Regulates expression of the redox buffer ergothioneine (ERG) in a carbon-source-dependent manner; loss of ERG or mycothiol (MSH, the other major redox buffer in this bacteria) leads to respiratory alterations and bioenergetic deficiencies that negatively impact virulence. In response to low external pH (like that found in host macrophage phagosomes) alters endogenous gene expression leading to acid resistance; MSH and WhiB3 are probably part of a regulatory circuit that mediates gene expression upon acid stress. Regulates pathogenic lipid synthesis, coordinating proprionate flux (and other host-derived fatty acid oxidation intermediates) into methyl-branched fatty acids (polyacyltrehalose, phthiocerol dimycocerosates, sulfolipids) and the storage lipid triacylglycerol, functioning as reductive sink. During intracellular growth M.tuberculosis uses host fatty acids as an energy source, generating large quantities of proprionate and NADH/NADPH, which are toxic and highly reducing respectively. WhiB3 is thought to help dissipate proprionate and NADH/NADPH by switching to the in vivo carbon source and via lipid anabolism. Responds to NO and O(2). Regulates expression of genes encoding modular polyketide synthases such as pks2, pks3 and fbpA. The oxidized apo-form of WhiB3 binds DNA (with 2 intramolecular disulfide bonds); holo-WhiB3 (with the 4Fe-4S cluster) binds DNA considerably less well. Discriminates poorly between specific and non-specific DNA-binding. Plays a role in virulence and nutritional stress. In its apo-form can act as a protein disulfide reductase. Its function is as follows. May respond to mycothiol (MSH) redox potential (E-MSH) which decreases at pH 4.5 for up to 72 hours, indicative of cellular reductive stress; deletion of whiB3 leads to a lesser E-MSH at 72 hours, indicative of cellular oxidative stress. Probably via its effects on production of polyketide lipids, regulates host gene expression, leading to blockage of phagosome maturation. Equilibration of extra- and intracytoplasmic pH kills bacteria. In Mycobacterium tuberculosis (strain ATCC 25618 / H37Rv), this protein is Redox- and pH-responsive transcriptional regulator WhiB3 (whiB3).